The primary structure comprises 119 residues: Large ribosomal subunit protein bL20 (119 aa).

The protein belongs to the bacterial ribosomal protein bL20 family.

In terms of biological role, binds directly to 23S ribosomal RNA and is necessary for the in vitro assembly process of the 50S ribosomal subunit. It is not involved in the protein synthesizing functions of that subunit. This is Large ribosomal subunit protein bL20 from Bacillus licheniformis (strain ATCC 14580 / DSM 13 / JCM 2505 / CCUG 7422 / NBRC 12200 / NCIMB 9375 / NCTC 10341 / NRRL NRS-1264 / Gibson 46).